A 512-amino-acid chain; its full sequence is DEAD-box ATP-dependent RNA helicase 5 (512 aa).

Disordered regions lie at residues 1-33 (MGRS…KLEA) and 45-76 (ATST…GGGK). Residues 14–45 (SRKSKKEKKSKKDKKRKLEAEAEVVVVEAAAA) adopt a coiled-coil conformation. The segment covering 16–30 (KSKKEKKSKKDKKRK) has biased composition (basic residues). A Q motif motif is present at residues 94–120 (SSFAATALPPQVLDCCKGFERPSPIQA). Positions 123–300 (WPYLLDGRDF…QEFMDPNPIK (178 aa)) constitute a Helicase ATP-binding domain. 136–143 (AATGSGKT) serves as a coordination point for ATP. Positions 248-251 (DEAD) match the DEAD box motif. The 144-residue stretch at 333–476 (LLDKYHKAQR…VVPPALTKFG (144 aa)) folds into the Helicase C-terminal domain.

The protein belongs to the DEAD box helicase family. DDX5/DBP2 subfamily.

Its subcellular location is the nucleus. The protein resides in the nucleolus. The enzyme catalyses ATP + H2O = ADP + phosphate + H(+). Functionally, ATP-dependent RNA helicase required for 60S ribosomal subunit synthesis. Involved in efficient pre-rRNA processing, predominantly at site A3, which is necessary for the normal formation of 25S and 5.8S rRNAs. The polypeptide is DEAD-box ATP-dependent RNA helicase 5 (Oryza sativa subsp. japonica (Rice)).